We begin with the raw amino-acid sequence, 352 residues long: Protein Wnt-3a (352 aa).

Positions 1 to 18 (MGCFGYLLLIIGLHQVLA) are cleaved as a signal peptide. 9 disulfides stabilise this stretch: C77-C88, C128-C136, C138-C155, C203-C217, C205-C212, C297-C312, C327-C342, C329-C339, and C334-C335. N87 carries an N-linked (GlcNAc...) asparagine glycan. Residue S209 is the site of O-palmitoleoyl serine attachment. N-linked (GlcNAc...) asparagine glycosylation occurs at N298.

Belongs to the Wnt family. Disulfide bonds have critical and distinct roles in secretion and activity. Loss of each conserved cysteine results in high molecular weight oxidized Wnt oligomers, which are formed through inter-Wnt disulfide bonding. In terms of processing, palmitoleoylation is required for efficient binding to frizzled receptors. Depalmitoleoylation leads to Wnt signaling pathway inhibition. In terms of tissue distribution, at neurula in anterior neural fold; at tailbud in dorsal midline of midbrain.

It localises to the secreted. It is found in the extracellular space. The protein localises to the extracellular matrix. Its function is as follows. Ligand for members of the frizzled family of seven transmembrane receptors. Functions in the canonical Wnt signaling pathway that results in activation of transcription factors of the TCF/LEF family. Required for normal embryonic mesoderm development and formation of caudal somites. Required for normal morphogenesis of the developing neural tube. This is Protein Wnt-3a (wnt3a) from Xenopus laevis (African clawed frog).